A 104-amino-acid chain; its full sequence is Flagellar hook-basal body complex protein FliE (104 aa).

Belongs to the FliE family.

The protein resides in the bacterial flagellum basal body. This Edwardsiella ictaluri (strain 93-146) protein is Flagellar hook-basal body complex protein FliE.